A 152-amino-acid polypeptide reads, in one-letter code: CMT1A duplicated region transcript 4 protein (152 aa).

The span at 1-11 (MDARRMKKEEG) shows a compositional bias: basic and acidic residues. 2 disordered regions span residues 1 to 23 (MDAR…RKLL) and 60 to 89 (ERPW…GKAV). The segment covering 65-74 (SRQNKPSSVI) has biased composition (polar residues).

Expressed in fetal skeletal muscle and kidney.

This is CMT1A duplicated region transcript 4 protein (CDRT4) from Homo sapiens (Human).